Here is a 252-residue protein sequence, read N- to C-terminus: Trans-aconitate 2-methyltransferase (252 aa).

The protein belongs to the methyltransferase superfamily. Tam family.

The protein localises to the cytoplasm. It carries out the reaction trans-aconitate + S-adenosyl-L-methionine = (E)-3-(methoxycarbonyl)pent-2-enedioate + S-adenosyl-L-homocysteine. Functionally, catalyzes the S-adenosylmethionine monomethyl esterification of trans-aconitate. This is Trans-aconitate 2-methyltransferase from Escherichia coli O9:H4 (strain HS).